We begin with the raw amino-acid sequence, 390 residues long: Chorismate synthase (390 aa).

R48 and R54 together coordinate NADP(+). Residues 125–127 (RSS), 238–239 (NA), G278, 293–297 (KPTSS), and R319 each bind FMN. The interval 359–390 (PRIPGSTTNQIHPVEMQASAPRAEDPEPDESS) is disordered.

Belongs to the chorismate synthase family. In terms of assembly, homotetramer. Requires FMNH2 as cofactor.

The catalysed reaction is 5-O-(1-carboxyvinyl)-3-phosphoshikimate = chorismate + phosphate. The protein operates within metabolic intermediate biosynthesis; chorismate biosynthesis; chorismate from D-erythrose 4-phosphate and phosphoenolpyruvate: step 7/7. Functionally, catalyzes the anti-1,4-elimination of the C-3 phosphate and the C-6 proR hydrogen from 5-enolpyruvylshikimate-3-phosphate (EPSP) to yield chorismate, which is the branch point compound that serves as the starting substrate for the three terminal pathways of aromatic amino acid biosynthesis. This reaction introduces a second double bond into the aromatic ring system. In Nitrosomonas europaea (strain ATCC 19718 / CIP 103999 / KCTC 2705 / NBRC 14298), this protein is Chorismate synthase.